We begin with the raw amino-acid sequence, 71 residues long: Small ribosomal subunit protein bS18 (71 aa).

Belongs to the bacterial ribosomal protein bS18 family. As to quaternary structure, part of the 30S ribosomal subunit. Forms a tight heterodimer with protein bS6.

In terms of biological role, binds as a heterodimer with protein bS6 to the central domain of the 16S rRNA, where it helps stabilize the platform of the 30S subunit. The sequence is that of Small ribosomal subunit protein bS18 from Nostoc punctiforme (strain ATCC 29133 / PCC 73102).